Reading from the N-terminus, the 113-residue chain is Death-associated protein-like 1.L (113 aa).

A disordered region spans residues 1 to 57 (MAKEQKMQSSPQALKAGHLPAVKAGGMRVSKKQGNEENSAPEKNAKKTLQEKPSSVL).

The protein belongs to the DAP-DAPL1 family. In terms of assembly, associates with ribosomes; preventing translation. Interacts with eiF5a (eif5a and eif5a2); preventing translation.

Its function is as follows. Ribosome-binding protein that promotes ribosome hibernation, a process during which ribosomes are stabilized in an inactive state and preserved from proteasomal degradation. Acts via its association with eiF5a (eif5a and eif5a2) at the polypeptide exit tunnel of the ribosome, preventing mRNA translation. Plays a key role in ribosome hibernation in the mature egg by preventing mRNA translation, leading to ribosome inactivation. Ribosomes, which are produced in large quantities during oogenesis, are stored and translationally repressed in the egg and early embryo. This chain is Death-associated protein-like 1.L (dapl1.L), found in Xenopus laevis (African clawed frog).